The sequence spans 213 residues: Dimethylamine corrinoid protein (213 aa).

In terms of domain architecture, B12-binding N-terminal spans 1–90; sequence MSKEELLQEL…LMPEGASGSK (90 aa). The region spanning 91 to 213 is the B12-binding domain; sequence LGVIVNGTVE…AVAKAKELLA (123 aa). His104 is a methylcob(III)alamin binding site.

This sequence belongs to the methylamine corrinoid protein family. In terms of assembly, copurifies with MtbA.

Its pathway is one-carbon metabolism; methanogenesis from dimethylamine. Functionally, acts as a methyl group carrier between MtbB1 and MtbA. Binds 1 corrinoid cofactor per protein, is subsequently demethylated by MtbA. The chain is Dimethylamine corrinoid protein from Methanosarcina barkeri.